Here is a 29-residue protein sequence, read N- to C-terminus: Glucagon (29 aa).

At serine 2 the chain carries Phosphoserine.

Belongs to the glucagon family.

The protein resides in the secreted. In terms of biological role, glucagon plays a key role in glucose metabolism and homeostasis. Regulates blood glucose by increasing gluconeogenesis and decreasing glycolysis. The protein is Glucagon (GCG) of Oryctolagus cuniculus (Rabbit).